Here is a 738-residue protein sequence, read N- to C-terminus: MTSPEGAQNKEIDCLSPEAQRLAEARLAAKRAARAEAREIRMKELERQQKEVEERPDKDFAEKGSRNMPSLSAATLASLGGTSSRRGSGDTSISMDTEASIREIKDSLAEVEEKYKKAMVSNAQLDNEKTNFMYQVDTLKDMLLELEEQLAESQRQYEEKNKEFEREKHAHSILQFQFAEVKEALRQREEMLEKHGIILNSEIATNGETSDTVNDVGYQAPTKITKEELNALKAAGEGTLGKAKEVEVKKEIVEKVGQRETLQDSEQEQPKLNTGKDCVDRGVLHPGEKAENQRPVEDSALSPGPLAGAKCEQEVQSQDQENTSILKSPEQIESHEVTNKSDSRDSNSPEPSSCRGGLDSEVSGPTALGIKNQSENSMDSQGKENQEDLGKGSFEPRPDHVLGQTPEIDKVSCTDSRGTGGNHLEDVVQAGDTIVEDQVGTMASAEQSKSMENHIGRSLNDGLGQSSERELAHEAAELEEALTQSSQAGGENTVTEAEDAAVRDEKPLQADVQATPAAPTVQSGHQDTTGPGSTDTKHTSPHAKERNKAKSEQQAEALDSPQKKTKNKKKKNKKKKAAAPMETCKDANEESSCQDPDVGDGEEEERVQATDKKWAAETPELKEDPQSRPSGKQNDAEEDSGPAEGPTDVLDQNSLQCADGDISPVGRKGPQRDASQIGGEEGLVPSQHPGQADEKGIEGHSVDNSDLSGELGGFNSESGEQAREEVGNSKSKEDCTMS.

Threonine 2 is subject to N-acetylthreonine. Serine 16 carries the phosphoserine modification. Positions 40 to 65 (IRMKELERQQKEVEERPDKDFAEKGS) are enriched in basic and acidic residues. A disordered region spans residues 40-98 (IRMKELERQQKEVEERPDKDFAEKGSRNMPSLSAATLASLGGTSSRRGSGDTSISMDTE). Residues 78-94 (SLGGTSSRRGSGDTSIS) show a composition bias toward low complexity. Serine 83, serine 84, serine 88, and serine 92 each carry phosphoserine. A coiled-coil region spans residues 94–194 (SMDTEASIRE…LRQREEMLEK (101 aa)). A Glycyl lysine isopeptide (Lys-Gly) (interchain with G-Cter in SUMO1) cross-link involves residue lysine 249. Basic and acidic residues-rich tracts occupy residues 253-262 (VEKVGQRETL) and 277-297 (DCVD…RPVE). Positions 253-738 (VEKVGQRETL…SKSKEDCTMS (486 aa)) are disordered. At serine 302 the chain carries Phosphoserine. A compositionally biased stretch (polar residues) spans 314-326 (EVQSQDQENTSIL). The segment covering 330-347 (EQIESHEVTNKSDSRDSN) has biased composition (basic and acidic residues). Residues serine 346 and serine 348 each carry the phosphoserine modification. Polar residues predominate over residues 371–380 (KNQSENSMDS). Composition is skewed to basic and acidic residues over residues 381–400 (QGKE…RPDH) and 467–476 (SERELAHEAA). Residues 479 to 580 (EEALTQSSQA…KNKKKKAAAP (102 aa)) form a DNA-binding region. Composition is skewed to polar residues over residues 483–495 (TQSS…NTVT) and 520–534 (TVQS…PGST). A compositionally biased stretch (basic and acidic residues) spans 535–553 (DTKHTSPHAKERNKAKSEQ). Phosphoserine is present on residues serine 551 and serine 560. Residues 563 to 577 (KKTKNKKKKNKKKKA) are compositionally biased toward basic residues. Over residues 606-626 (RVQATDKKWAAETPELKEDPQ) the composition is skewed to basic and acidic residues. A phosphoserine mark is found at serine 675 and serine 701. Composition is skewed to basic and acidic residues over residues 691-703 (QADE…HSVD) and 720-738 (EQAR…CTMS).

Belongs to the LRRFIP family. In terms of assembly, homodimer. May also form higher oligomers. Interacts with FLII. Interacts with MYD88. Competes with FLII for MyD88-binding, even in the absence of LPS.

It is found in the nucleus. It localises to the cytoplasm. Functionally, transcriptional repressor which preferentially binds to the GC-rich consensus sequence (5'-AGCCCCCGGCG-3') and may regulate expression of TNF, EGFR and PDGFA. May control smooth muscle cells proliferation following artery injury through PDGFA repression. May also bind double-stranded RNA. Positively regulates Toll-like receptor (TLR) signaling in response to agonist probably by competing with the negative FLII regulator for MYD88-binding. The protein is Leucine-rich repeat flightless-interacting protein 1 (Lrrfip1) of Rattus norvegicus (Rat).